A 330-amino-acid polypeptide reads, in one-letter code: Polyprenal reductase (330 aa).

Over 1–19 (MASWVGTELSALNPLRTLW) the chain is Cytoplasmic. The chain crosses the membrane as a helical span at residues 20 to 40 (LALAAAFLLALLLQLAPAGLL). Residues 41 to 74 (PNCALFQDLIRYGKTKLSGPRRPAVCRAFDVPKR) are Lumenal-facing. The chain crosses the membrane as a helical span at residues 75–95 (YFSHFYVVSVLWNGFLLWFLS). The Cytoplasmic portion of the chain corresponds to 96 to 132 (RSLFLGAPFPNWLRALLRTLGSTQFRALEMESKASQM). A helical transmembrane segment spans residues 133–153 (LVGELALSAFLVLVFLWVHSV). Topologically, residues 154-168 (RRLFECFYISVFSNA) are lumenal. The helical transmembrane segment at 169–189 (VMHVVQYCFGLVYYVLVGLTV) threads the bilayer. The Cytoplasmic portion of the chain corresponds to 190-206 (LSQVPMDDKNVYMLGKN). A helical transmembrane segment spans residues 207–227 (LLLPARWFHVLGMMMFLWSSA). Topologically, residues 228–277 (HQYECHVILSNLRRNKKGAIVHCQHRIPFGDWFEYVSSANYLAELMIYIS) are lumenal. A helical transmembrane segment spans residues 278–298 (MAVTFGFHNFTWWLVVAYVFF). Residues 299 to 330 (CQALSAFFNHKFYKSTFVSYPKHRKAFLPFLF) are Cytoplasmic-facing.

This sequence belongs to the steroid 5-alpha reductase family. Polyprenal reductase subfamily.

It is found in the endoplasmic reticulum membrane. It carries out the reaction a di-trans,poly-cis-dolichal + NADP(+) = a di-trans,poly-cis-polyprenal + NADPH + H(+). It catalyses the reaction a 3-oxo-5alpha-steroid + NADP(+) = a 3-oxo-Delta(4)-steroid + NADPH + H(+). The catalysed reaction is androst-4-ene-3,17-dione + NADPH + H(+) = 5alpha-androstan-3,17-dione + NADP(+). The enzyme catalyses 17beta-hydroxy-5alpha-androstan-3-one + NADP(+) = testosterone + NADPH + H(+). It participates in protein modification; protein glycosylation. Plays a key role in early steps of protein N-linked glycosylation by being involved in the conversion of polyprenol into dolichol. Acts as a polyprenal reductase that mediates the reduction of polyprenal into dolichal in a NADP-dependent mechanism. Dolichols are required for the synthesis of dolichol-linked monosaccharides and the oligosaccharide precursor used for N-glycosylation. Also able to convert testosterone (T) into 5-alpha-dihydrotestosterone (DHT). The protein is Polyprenal reductase of Mesocricetus auratus (Golden hamster).